Reading from the N-terminus, the 438-residue chain is L-cysteine:1D-myo-inositol 2-amino-2-deoxy-alpha-D-glucopyranoside ligase (438 aa).

The tract at residues 1-27 is disordered; sequence MDSWTSPDVPALPFTAEGPRVHDTARG. Residue Cys-45 coordinates Zn(2+). Residues 45–48, Thr-60, and 83–85 contribute to the L-cysteinyl-5'-AMP site; these read CGIT and NVT. The 'HIGH' region signature appears at 47–57; it reads ITPYDATHLGH. A 'ERGGDP' region motif is present at residues 197-202; it reads DRGGDP. An L-cysteinyl-5'-AMP-binding site is contributed by Trp-238. Cys-242 lines the Zn(2+) pocket. 260 to 262 serves as a coordination point for L-cysteinyl-5'-AMP; it reads GDD. His-267 serves as a coordination point for Zn(2+). Residue Val-293 participates in L-cysteinyl-5'-AMP binding. The short motif at 299–303 is the 'KMSKS' region element; it reads KMSKS.

Belongs to the class-I aminoacyl-tRNA synthetase family. MshC subfamily. Monomer. Zn(2+) is required as a cofactor.

The catalysed reaction is 1D-myo-inositol 2-amino-2-deoxy-alpha-D-glucopyranoside + L-cysteine + ATP = 1D-myo-inositol 2-(L-cysteinylamino)-2-deoxy-alpha-D-glucopyranoside + AMP + diphosphate + H(+). Its function is as follows. Catalyzes the ATP-dependent condensation of GlcN-Ins and L-cysteine to form L-Cys-GlcN-Ins. This chain is L-cysteine:1D-myo-inositol 2-amino-2-deoxy-alpha-D-glucopyranoside ligase, found in Kytococcus sedentarius (strain ATCC 14392 / DSM 20547 / JCM 11482 / CCUG 33030 / NBRC 15357 / NCTC 11040 / CCM 314 / 541) (Micrococcus sedentarius).